The chain runs to 918 residues: MIAAQLLAYYFTELKDDQVKKIDKYLYAMRLSDETLLDIMNRFKKEMKNGLSRDFNPTATVKMLPTFVRSIPDGSEKGDFIALDLGGSSFRILRVQVNHEQNRPVHMESEVYDTPENIMHGSGSQLFDHVLECLGDFMEKKKIKDKKLPVGFTFSFPCRQSKIDQAILITWTKRFKARGAEGNYVVKLLDKAIKKRGDYDANIVAVVNDTVGTMIDCGYDDQHCEVGLIIGTGTNACYMEELRQIDFGWGDDGRMCINTEWGDLGDDGSLEDIRKEFDREFRRGSLNPGKQRFEKMVSGRYMEDVVRLVLVKMAKEGLLFEGRITPELLTRGKFNTSDVSAIEKDKEGLHNAKEILTRLGVERSDDDCVSVQHVCTIVSFRSANLVAATLGAILNRLRDNKSTPRLRTTVRVDGSLYKTHPQYSRRFHKTLRRLVPDSDVRFLLSESGTGKGAAMVTAVAYRLAEQHRQIEETLAHFRLSKQTLMEVKKRLRTEMEMGLRKETNSNATVNMLPSFLRSIPDGTEDGDFLALDLGGTNFRVLLVKIRSGKKSTVEMHNKIYRIPIEIMQGTGEELFDHIVSCISDFLDYMGIKGPRMPLGFTFSFPCQQTSLDAGILITWTKGFKATDCVGHDVVTLLRDAVKRREEFDLDVVAVVNDTVGTMMTCAYEEPTCEVGLIVGTGSNACYMEEMKNVEMVEGNQRQMCINMEWGAFGDNGCSDDIRTDFDKVVDEYSLNSGNQRFENMISGIYLGEIVRNILIDFTKKGFLFRGQISEPLKTRGIFETKFLSQIESDRLALLQVRAILQQLGLNSTCDDSILVKTVCGVVSKRAAQLCGAGMAAVVEKIRENRGLDRLNVTVGVDGTLYKLHPQFSRIMHQTVKELSPKCNVSFLLSEDGSGKGAALITAVGVRLRGESAIS.

Methionine 1 carries the N-acetylmethionine modification. The interval 1-10 (MIAAQLLAYY) is mitochondrial-binding peptide (MBP). Hexokinase domains follow at residues 16 to 458 (DDQV…MVTA) and 464 to 906 (AEQH…LITA). Residues arginine 30 and 84–89 (DLGGSS) each bind ATP. A hexokinase small subdomain 1 region spans residues 73-207 (DGSEKGDFIA…DYDANIVAVV (135 aa)). 84 to 91 (DLGGSSFR) is a D-glucose 6-phosphate binding site. Residues serine 155, 172–173 (TK), and 208–209 (ND) each bind D-glucose. The interval 208–447 (NDTVGTMIDC…SDVRFLLSES (240 aa)) is hexokinase large subdomain 1. Residues aspartate 209 and threonine 232 each contribute to the D-glucose 6-phosphate site. D-glucose is bound by residues asparagine 235, glutamate 260, and 291–294 (QRFE). A Phosphoserine modification is found at serine 337. 413 to 415 (DGS) provides a ligand contact to D-glucose 6-phosphate. Residues 425-426 (RR) and 532-537 (DLGGTN) contribute to the ATP site. Residues 521 to 655 (DGTEDGDFLA…EFDLDVVAVV (135 aa)) are hexokinase small subdomain 2. 532 to 536 (DLGGT) is a D-glucose 6-phosphate binding site. Residues 603–604 (SF), 620–621 (TK), and 656–657 (ND) contribute to the D-glucose site. A hexokinase large subdomain 2 region spans residues 656 to 895 (NDTVGTMMTC…CNVSFLLSED (240 aa)). Residues aspartate 657 and threonine 680 each coordinate D-glucose 6-phosphate. Threonine 680 lines the ATP pocket. Residues 682–683 (SN), glutamate 708, and glutamate 742 each bind D-glucose. ATP-binding positions include 747–748 (GI), 784–788 (TKFLS), and 863–867 (TLYKL). Residues 861-863 (DGT) and serine 897 contribute to the D-glucose 6-phosphate site.

Belongs to the hexokinase family. Monomer. Interacts with RABL2/RABL2A; binds preferentially to GTP-bound RABL2. Interacts with VDAC1. The HK1-VDAC1 complex interacts with ATF2. Interacts (via N-terminal spermatogenic cell-specific region) with PFKM (via C-terminus). Interacts with SMAD5.

It localises to the mitochondrion outer membrane. It is found in the cytoplasm. The protein localises to the cytosol. It carries out the reaction a D-hexose + ATP = a D-hexose 6-phosphate + ADP + H(+). It catalyses the reaction D-fructose + ATP = D-fructose 6-phosphate + ADP + H(+). The enzyme catalyses D-glucose + ATP = D-glucose 6-phosphate + ADP + H(+). The catalysed reaction is D-mannose + ATP = D-mannose 6-phosphate + ADP + H(+). It carries out the reaction D-glucosamine + ATP = D-glucosamine 6-phosphate + ADP + H(+). The protein operates within carbohydrate metabolism; hexose metabolism. It functions in the pathway carbohydrate degradation; glycolysis; D-glyceraldehyde 3-phosphate and glycerone phosphate from D-glucose: step 1/4. Its activity is regulated as follows. Hexokinase is an allosteric enzyme inhibited by its product D-glucose 6-phosphate. Hexokinase activity is inhibited by N-acetyl-D-glucosamine. In terms of biological role, catalyzes the phosphorylation of various hexoses, such as D-glucose, D-glucosamine, D-fructose, D-mannose and 2-deoxy-D-glucose, to hexose 6-phosphate (D-glucose 6-phosphate, D-glucosamine 6-phosphate, D-fructose 6-phosphate, D-mannose 6-phosphate and 2-deoxy-D-glucose 6-phosphate, respectively). Does not phosphorylate N-acetyl-D-glucosamine. Mediates the initial step of glycolysis by catalyzing phosphorylation of D-glucose to D-glucose 6-phosphate. Involved in innate immunity and inflammation by acting as a pattern recognition receptor for bacterial peptidoglycan. When released in the cytosol, N-acetyl-D-glucosamine component of bacterial peptidoglycan inhibits the hexokinase activity of HK1 and causes its dissociation from mitochondrial outer membrane, thereby activating the NLRP3 inflammasome. This is Hexokinase-1 from Bos taurus (Bovine).